The following is a 462-amino-acid chain: CCA-adding enzyme (462 aa).

Ser54 and Arg57 together coordinate ATP. Residues Ser54 and Arg57 each contribute to the CTP site. Mg(2+) is bound by residues Asp66, Asp68, and Asp117. 3 residues coordinate ATP: His140, Lys160, and Tyr169. CTP is bound by residues His140, Lys160, and Tyr169.

It belongs to the tRNA nucleotidyltransferase/poly(A) polymerase family. Archaeal CCA-adding enzyme subfamily. Homodimer. Mg(2+) serves as cofactor.

It catalyses the reaction a tRNA precursor + 2 CTP + ATP = a tRNA with a 3' CCA end + 3 diphosphate. The enzyme catalyses a tRNA with a 3' CCA end + 2 CTP + ATP = a tRNA with a 3' CCACCA end + 3 diphosphate. Functionally, catalyzes the addition and repair of the essential 3'-terminal CCA sequence in tRNAs without using a nucleic acid template. Adds these three nucleotides in the order of C, C, and A to the tRNA nucleotide-73, using CTP and ATP as substrates and producing inorganic pyrophosphate. tRNA 3'-terminal CCA addition is required both for tRNA processing and repair. Also involved in tRNA surveillance by mediating tandem CCA addition to generate a CCACCA at the 3' terminus of unstable tRNAs. While stable tRNAs receive only 3'-terminal CCA, unstable tRNAs are marked with CCACCA and rapidly degraded. The chain is CCA-adding enzyme from Halorubrum lacusprofundi (strain ATCC 49239 / DSM 5036 / JCM 8891 / ACAM 34).